The sequence spans 222 residues: MELTLHEARVIGCLLEKEVTTPEQYPLSLNALTLACNQKTSRDPVLDLSEALVQDALDSLNKKRLISEQSGFGSRVVKYKHRFCNTEFSELQLSSAAVAIICLLLLRGPQTPGELRTRSNRLHDFKDVLEVEACIKQLMERDKPVLAQLPREPGKRECRYAELFSQGAEQINAASLSADSPSAGSNSLNAQDRQQLEARVTQLEEQVAELKDKLDSLIASLS.

Residues S175 to R193 show a composition bias toward polar residues. The interval S175–Q194 is disordered.

The protein belongs to the UPF0502 family.

The chain is UPF0502 protein Shewmr4_1554 from Shewanella sp. (strain MR-4).